The sequence spans 69 residues: Pleurain-A1 (69 aa).

A signal peptide spans 1 to 18 (MFTLKKTLLLLFFLGTIS). Residues 19-43 (ISLCKQERDADEDDGRKMTEEEVKR) constitute a propeptide that is removed on maturation. Cys63 and Cys69 are joined by a disulfide.

As to expression, expressed by the skin glands.

It is found in the secreted. Antimicrobial peptide. Has activity against the Gram-positive bacterium S.aureus ATCC2592 (MIC=15 ug/ml), the Gram-negative bacteria E.coli ATCC25922 (MIC=60 ug/ml), B.dysenteriae (MIC=120 ug/ml), H.pylori NTCT11637 (MIC=30 ug/ml), and the fungus C.albicans ATCC2002 (MIC=30 ug/ml). Has little hemolytic activity on rabbit red blood cells. This chain is Pleurain-A1, found in Nidirana pleuraden (Yunnan pond frog).